Reading from the N-terminus, the 295-residue chain is Ankyrin repeat and SOCS box protein 17 (295 aa).

One copy of the ANK repeat lies at 146 to 176 (SGITPLLYVAQTRQSNILKILLQYGILEREK). The SOCS box domain occupies 243-295 (DYIPPTRYKDPCELVHLCRITIRTQLLANNMLPNGIFSLLIPTRLQNFLNLES).

The protein belongs to the ankyrin SOCS box (ASB) family. In terms of tissue distribution, specifically expressed in testis. Localizes to spermatogenic cells in testis, with highest expression in round spermatids and condensing spermatids and lower expression in pachytene spermatocytes.

It participates in protein modification; protein ubiquitination. Its function is as follows. May be a substrate-recognition component of a SCF-like ECS (Elongin-Cullin-SOCS-box protein) E3 ubiquitin-protein ligase complex which mediates the ubiquitination and subsequent proteasomal degradation of target proteins. The polypeptide is Ankyrin repeat and SOCS box protein 17 (Asb17) (Mus musculus (Mouse)).